We begin with the raw amino-acid sequence, 140 residues long: Nucleoside diphosphate kinase (140 aa).

Residues K11, F59, R87, T93, R104, and N114 each contribute to the ATP site. H117 functions as the Pros-phosphohistidine intermediate in the catalytic mechanism.

Belongs to the NDK family. As to quaternary structure, homotetramer. Requires Mg(2+) as cofactor.

The protein resides in the cytoplasm. It catalyses the reaction a 2'-deoxyribonucleoside 5'-diphosphate + ATP = a 2'-deoxyribonucleoside 5'-triphosphate + ADP. It carries out the reaction a ribonucleoside 5'-diphosphate + ATP = a ribonucleoside 5'-triphosphate + ADP. Functionally, major role in the synthesis of nucleoside triphosphates other than ATP. The ATP gamma phosphate is transferred to the NDP beta phosphate via a ping-pong mechanism, using a phosphorylated active-site intermediate. This chain is Nucleoside diphosphate kinase, found in Agrobacterium fabrum (strain C58 / ATCC 33970) (Agrobacterium tumefaciens (strain C58)).